Here is a 407-residue protein sequence, read N- to C-terminus: UPF0761 membrane protein AZOSEA40600 (407 aa).

6 helical membrane-spanning segments follow: residues 29-49 (SLAF…IALF), 92-112 (GLTL…LMTI), 132-152 (LMVH…SVLA), 174-194 (FARL…YYAV), 207-227 (GGIA…LFIV), and 239-259 (FAVL…ILLG).

The protein belongs to the UPF0761 family.

Its subcellular location is the cell inner membrane. The protein is UPF0761 membrane protein AZOSEA40600 of Aromatoleum aromaticum (strain DSM 19018 / LMG 30748 / EbN1) (Azoarcus sp. (strain EbN1)).